A 173-amino-acid polypeptide reads, in one-letter code: RNA pyrophosphohydrolase (173 aa).

The 154-residue stretch at Pro-13–Ala-166 folds into the Nudix hydrolase domain. Positions Gly-54–Gly-75 match the Nudix box motif.

It belongs to the Nudix hydrolase family. RppH subfamily. Requires a divalent metal cation as cofactor.

In terms of biological role, accelerates the degradation of transcripts by removing pyrophosphate from the 5'-end of triphosphorylated RNA, leading to a more labile monophosphorylated state that can stimulate subsequent ribonuclease cleavage. This Mesorhizobium japonicum (strain LMG 29417 / CECT 9101 / MAFF 303099) (Mesorhizobium loti (strain MAFF 303099)) protein is RNA pyrophosphohydrolase.